We begin with the raw amino-acid sequence, 196 residues long: MKEVIIATKNEGKVREFKAMLEPRGYDVKSLLDIGYTPEIEETGQTFEENAVIKAETISKETGKIVIADDSGLSVDYLGGSPGVYSARYAGEEKNDLANLKKLLKELEGVEKEDRSARFRCALAICIPGQETKTVEGSVEGYITEEPRGTNGFGYDPVFLVKDKDQTMAELSSGEKNKISHRAEALKKLSALLDQA.

8-13 (TKNEGK) is a binding site for substrate. 2 residues coordinate Mg(2+): Glu-41 and Asp-70. Asp-70 acts as the Proton acceptor in catalysis. Substrate-binding positions include Ser-71, 153–156 (FGYD), Lys-176, and 181–182 (HR).

This sequence belongs to the HAM1 NTPase family. Homodimer. Requires Mg(2+) as cofactor.

It catalyses the reaction XTP + H2O = XMP + diphosphate + H(+). The catalysed reaction is dITP + H2O = dIMP + diphosphate + H(+). It carries out the reaction ITP + H2O = IMP + diphosphate + H(+). Its function is as follows. Pyrophosphatase that catalyzes the hydrolysis of nucleoside triphosphates to their monophosphate derivatives, with a high preference for the non-canonical purine nucleotides XTP (xanthosine triphosphate), dITP (deoxyinosine triphosphate) and ITP. Seems to function as a house-cleaning enzyme that removes non-canonical purine nucleotides from the nucleotide pool, thus preventing their incorporation into DNA/RNA and avoiding chromosomal lesions. The chain is dITP/XTP pyrophosphatase from Bacillus licheniformis (strain ATCC 14580 / DSM 13 / JCM 2505 / CCUG 7422 / NBRC 12200 / NCIMB 9375 / NCTC 10341 / NRRL NRS-1264 / Gibson 46).